The primary structure comprises 468 residues: Aldehyde dehydrogenase family 3 member B1 (468 aa).

Methionine 1 carries the post-translational modification N-acetylmethionine. Residue 188–193 (GSPRVG) participates in NAD(+) binding. Active-site residues include glutamate 210 and cysteine 244. A lipid anchor (S-palmitoyl cysteine) is attached at cysteine 463. Position 465 is a cysteine methyl ester (cysteine 465). Residue cysteine 465 is the site of S-geranylgeranyl cysteine attachment. Residues 466–468 (TLL) constitute a propeptide, removed in mature form.

The protein belongs to the aldehyde dehydrogenase family. Post-translationally, dually lipidated in the C-terminus; prenylation occurs prior to, and is a prerequisite for palmitoylation. It is also required for activity towards long-chain substrates. Highest expression in kidney and lung.

Its subcellular location is the cell membrane. It catalyses the reaction an aldehyde + NADP(+) + H2O = a carboxylate + NADPH + 2 H(+). The enzyme catalyses an aldehyde + NAD(+) + H2O = a carboxylate + NADH + 2 H(+). It carries out the reaction a long-chain fatty aldehyde + NAD(+) + H2O = a long-chain fatty acid + NADH + 2 H(+). The catalysed reaction is a medium-chain fatty aldehyde + NAD(+) + H2O = a medium-chain fatty acid + NADH + 2 H(+). It catalyses the reaction octanal + NAD(+) + H2O = octanoate + NADH + 2 H(+). The enzyme catalyses nonanal + NAD(+) + H2O = nonanoate + NADH + 2 H(+). It carries out the reaction hexadecanoate + NADH + 2 H(+) = hexadecanal + NAD(+) + H2O. The catalysed reaction is (2E)-octenal + NAD(+) + H2O = (2E)-octenoate + NADH + 2 H(+). It catalyses the reaction (E)-non-2-enal + NAD(+) + H2O = (E)-non-2-enoate + NADH + 2 H(+). The enzyme catalyses (E)-4-hydroxynon-2-enal + NAD(+) + H2O = (E)-4-hydroxynon-2-enoate + NADH + 2 H(+). It carries out the reaction (2E)-hexadecenal + NAD(+) + H2O = (E)-hexadec-2-enoate + NADH + 2 H(+). The catalysed reaction is benzaldehyde + NAD(+) + H2O = benzoate + NADH + 2 H(+). It catalyses the reaction a medium-chain fatty aldehyde + NADP(+) + H2O = a medium-chain fatty acid + NADPH + 2 H(+). The enzyme catalyses hexanal + NADP(+) + H2O = hexanoate + NADPH + 2 H(+). It carries out the reaction octanal + NADP(+) + H2O = octanoate + NADPH + 2 H(+). The catalysed reaction is nonanal + NADP(+) + H2O = nonanoate + NADPH + 2 H(+). It catalyses the reaction (2E)-octenal + NADP(+) + H2O = (2E)-octenoate + NADPH + 2 H(+). The enzyme catalyses (E)-non-2-enal + NADP(+) + H2O = (E)-non-2-enoate + NADPH + 2 H(+). It carries out the reaction (E)-4-hydroxynon-2-enal + NADP(+) + H2O = (E)-4-hydroxynon-2-enoate + NADPH + 2 H(+). The catalysed reaction is benzaldehyde + NADP(+) + H2O = benzoate + NADPH + 2 H(+). It functions in the pathway alcohol metabolism; ethanol degradation; acetate from ethanol: step 2/2. Its function is as follows. Oxidizes medium and long chain saturated and unsaturated fatty aldehydes generated in the plasma membrane into non-toxic fatty acids. May have a protective role against the cytotoxicity induced by lipid peroxidation. Short-chain fatty aldehydes are not good substrates. Can use both NADP(+) and NAD(+) as electron acceptor in vitro, however in vivo preference will depend on their tissue levels. Low activity towards acetaldehyde and 3,4-dihydroxyphenylacetaldehyde. Able to metabolize aromatic aldehydes such as benzaldehyde to their acid form. This is Aldehyde dehydrogenase family 3 member B1 (ALDH3B1) from Homo sapiens (Human).